The primary structure comprises 123 residues: Large ribosomal subunit protein uL18 (123 aa).

Belongs to the universal ribosomal protein uL18 family. Part of the 50S ribosomal subunit; part of the 5S rRNA/L5/L18/L25 subcomplex. Contacts the 5S and 23S rRNAs.

Its function is as follows. This is one of the proteins that bind and probably mediate the attachment of the 5S RNA into the large ribosomal subunit, where it forms part of the central protuberance. This is Large ribosomal subunit protein uL18 from Desulforudis audaxviator (strain MP104C).